The chain runs to 692 residues: Elongation factor G (692 aa).

Residues 9-284 (HKVRNIGIAA…AVVDYLPAPD (276 aa)) form the tr-type G domain. Residues 18-25 (AHIDAGKT), 82-86 (DTPGH), and 136-139 (NKMD) contribute to the GTP site.

The protein belongs to the TRAFAC class translation factor GTPase superfamily. Classic translation factor GTPase family. EF-G/EF-2 subfamily.

It is found in the cytoplasm. Functionally, catalyzes the GTP-dependent ribosomal translocation step during translation elongation. During this step, the ribosome changes from the pre-translocational (PRE) to the post-translocational (POST) state as the newly formed A-site-bound peptidyl-tRNA and P-site-bound deacylated tRNA move to the P and E sites, respectively. Catalyzes the coordinated movement of the two tRNA molecules, the mRNA and conformational changes in the ribosome. This chain is Elongation factor G, found in Campylobacter concisus (strain 13826).